Reading from the N-terminus, the 61-residue chain is Small ribosomal subunit protein uS14 (61 aa).

Zn(2+) is bound by residues Cys-24, Cys-27, Cys-40, and Cys-43.

It belongs to the universal ribosomal protein uS14 family. Zinc-binding uS14 subfamily. Part of the 30S ribosomal subunit. Contacts proteins S3 and S10. Requires Zn(2+) as cofactor.

Its function is as follows. Binds 16S rRNA, required for the assembly of 30S particles and may also be responsible for determining the conformation of the 16S rRNA at the A site. In Pelobacter propionicus (strain DSM 2379 / NBRC 103807 / OttBd1), this protein is Small ribosomal subunit protein uS14.